A 100-amino-acid chain; its full sequence is uncharacterized protein (100 aa).

This is an uncharacterized protein from Caulobacter vibrioides (strain ATCC 19089 / CIP 103742 / CB 15) (Caulobacter crescentus).